A 258-amino-acid polypeptide reads, in one-letter code: Pyridoxine 5'-phosphate synthase (258 aa).

Asn-16 contacts 3-amino-2-oxopropyl phosphate. 1-deoxy-D-xylulose 5-phosphate is bound at residue 18-19 (DH). Arg-27 is a binding site for 3-amino-2-oxopropyl phosphate. His-52 serves as the catalytic Proton acceptor. The 1-deoxy-D-xylulose 5-phosphate site is built by Arg-54 and His-59. Catalysis depends on Glu-79, which acts as the Proton acceptor. Thr-109 is a binding site for 1-deoxy-D-xylulose 5-phosphate. The Proton donor role is filled by His-200. 3-amino-2-oxopropyl phosphate contacts are provided by residues Gly-201 and 222 to 223 (GH).

It belongs to the PNP synthase family. In terms of assembly, homooctamer; tetramer of dimers.

Its subcellular location is the cytoplasm. The catalysed reaction is 3-amino-2-oxopropyl phosphate + 1-deoxy-D-xylulose 5-phosphate = pyridoxine 5'-phosphate + phosphate + 2 H2O + H(+). The protein operates within cofactor biosynthesis; pyridoxine 5'-phosphate biosynthesis; pyridoxine 5'-phosphate from D-erythrose 4-phosphate: step 5/5. Catalyzes the complicated ring closure reaction between the two acyclic compounds 1-deoxy-D-xylulose-5-phosphate (DXP) and 3-amino-2-oxopropyl phosphate (1-amino-acetone-3-phosphate or AAP) to form pyridoxine 5'-phosphate (PNP) and inorganic phosphate. This is Pyridoxine 5'-phosphate synthase from Burkholderia lata (strain ATCC 17760 / DSM 23089 / LMG 22485 / NCIMB 9086 / R18194 / 383).